The following is a 250-amino-acid chain: Large ribosomal subunit protein uL30 (250 aa).

The protein belongs to the universal ribosomal protein uL30 family.

This is Large ribosomal subunit protein uL30 (RPL7) from Yarrowia lipolytica (strain CLIB 122 / E 150) (Yeast).